A 128-amino-acid chain; its full sequence is Small ribosomal subunit protein uS9 (128 aa).

It belongs to the universal ribosomal protein uS9 family.

This Christiangramia forsetii (strain DSM 17595 / CGMCC 1.15422 / KT0803) (Gramella forsetii) protein is Small ribosomal subunit protein uS9.